A 660-amino-acid chain; its full sequence is Oligopeptide-binding protein AliA (660 aa).

An N-terminal signal peptide occupies residues 1 to 22; the sequence is MKSSKLFALAGVTLLAATTLAA. Cys23 carries the N-palmitoyl cysteine lipid modification. A lipid anchor (S-diacylglycerol cysteine) is attached at Cys23. The disordered stretch occupies residues 638–660; it reads EKWMKEKEESNKKAQEDLAKHVK.

This sequence belongs to the bacterial solute-binding protein 5 family.

It localises to the cell membrane. Part of the binding-protein-dependent transport system for oligopeptides; probably an oligopeptide binding protein. In Streptococcus pneumoniae serotype 4 (strain ATCC BAA-334 / TIGR4), this protein is Oligopeptide-binding protein AliA (aliA).